Reading from the N-terminus, the 117-residue chain is Large ribosomal subunit protein bL20 (117 aa).

The protein belongs to the bacterial ribosomal protein bL20 family.

Binds directly to 23S ribosomal RNA and is necessary for the in vitro assembly process of the 50S ribosomal subunit. It is not involved in the protein synthesizing functions of that subunit. This chain is Large ribosomal subunit protein bL20, found in Mesomycoplasma hyopneumoniae (strain J / ATCC 25934 / NCTC 10110) (Mycoplasma hyopneumoniae).